The sequence spans 473 residues: Heavy metal-associated isoprenylated plant protein 32 (473 aa).

An HMA domain is found at 9–72 (IQTCVLKVNI…KLAKSGKHAE (64 aa)). Positions 20 and 23 each coordinate a metal cation. 3 disordered regions span residues 96-139 (QIDH…KMGQ), 162-230 (KLPP…PNMT), and 246-343 (ANLA…QNMS). Positions 118–131 (KNGGGGGGGGGGGN) are enriched in gly residues. Over residues 187 to 217 (PEDDDDDDFSDEFDDEFTDDDDDEFDDEFDD) the composition is skewed to acidic residues. The segment covering 253–339 (AKNGGKGAPA…GFRPMGGGGP (87 aa)) has biased composition (gly residues). Cys-470 bears the Cysteine methyl ester mark. A lipid anchor (S-farnesyl cysteine) is attached at Cys-470. Residues 471–473 (DIM) constitute a propeptide, removed in mature form.

It belongs to the HIPP family.

Functionally, heavy-metal-binding protein. The chain is Heavy metal-associated isoprenylated plant protein 32 from Arabidopsis thaliana (Mouse-ear cress).